The primary structure comprises 390 residues: Glucose-fructose oxidoreductase domain-containing protein 1 (390 aa).

An N-terminal signal peptide occupies residues 1 to 21 (MLPGVGVFGTSLTSRVIIPLL). N-linked (GlcNAc...) asparagine glycosylation is found at asparagine 161, asparagine 270, and asparagine 354.

Belongs to the Gfo/Idh/MocA family. In terms of assembly, homodimer.

The protein resides in the secreted. In terms of biological role, probably catalytically inactive enzyme. Does not bind NAD or NADP. This Xenopus tropicalis (Western clawed frog) protein is Glucose-fructose oxidoreductase domain-containing protein 1 (gfod1).